The following is a 588-amino-acid chain: Adenine deaminase (588 aa).

It belongs to the metallo-dependent hydrolases superfamily. Adenine deaminase family. Homodimer. Mn(2+) is required as a cofactor.

The enzyme catalyses adenine + H2O + H(+) = hypoxanthine + NH4(+). This Escherichia coli O45:K1 (strain S88 / ExPEC) protein is Adenine deaminase.